The primary structure comprises 397 residues: Glia-derived nexin (397 aa).

The N-terminal stretch at 1–19 (MNWHFPFFILTTVTLSSVY) is a signal peptide. Asn-159 is a glycosylation site (N-linked (GlcNAc...) asparagine).

This sequence belongs to the serpin family.

The protein localises to the secreted. The protein resides in the extracellular space. Serine protease inhibitor with activity toward thrombin, trypsin, and urokinase. Promotes neurite extension by inhibiting thrombin. Binds heparin. The sequence is that of Glia-derived nexin (Serpine2) from Rattus norvegicus (Rat).